The sequence spans 765 residues: Eukaryotic translation initiation factor 3 subunit B (765 aa).

Residues 1 to 136 (MKNFLPRTLK…LFVECGSMND (136 aa)) form a sufficient for interaction with HCR1 and TIF32 region. Residues 28–261 (RNTQLKRSKI…GVTAWGGPNF (234 aa)) form a sufficient for interaction with PIC8 region. Serine 61 carries the post-translational modification Phosphoserine. Tyrosine 67 carries the post-translational modification Phosphotyrosine. Positions 77–162 (QYIVVNGAPV…HRLFLYTMKD (86 aa)) constitute an RRM domain. Serine 671 carries the phosphoserine modification.

Belongs to the eIF-3 subunit B family. As to quaternary structure, component of the eukaryotic translation initiation factor 3 (eIF-3) complex.

Its subcellular location is the cytoplasm. Its function is as follows. RNA-binding component of the eukaryotic translation initiation factor 3 (eIF-3) complex, which is involved in protein synthesis of a specialized repertoire of mRNAs and, together with other initiation factors, stimulates binding of mRNA and methionyl-tRNAi to the 40S ribosome. The eIF-3 complex specifically targets and initiates translation of a subset of mRNAs involved in cell proliferation. This is Eukaryotic translation initiation factor 3 subunit B from Saccharomyces cerevisiae (strain YJM789) (Baker's yeast).